We begin with the raw amino-acid sequence, 826 residues long: Disintegrin and metalloproteinase domain-containing protein 8 (826 aa).

Positions 1-16 (MLGLWLLSVLWTPAVA) are cleaved as a signal peptide. Topologically, residues 17–658 (PGPPLPHVKQ…VSDEQAASTS (642 aa)) are extracellular. N-linked (GlcNAc...) asparagine glycosylation is found at Asn89 and Asn260. The 200-residue stretch at 196-395 (RYVELYVVAD…PQTGCLTNVP (200 aa)) folds into the Peptidase M12B domain. Disulfide bonds link Cys305–Cys390, Cys346–Cys374, Cys348–Cys357, Cys430–Cys452, Cys443–Cys449, Cys461–Cys481, Cys468–Cys498, Cys493–Cys503, Cys563–Cys615, Cys615–Cys625, Cys619–Cys631, and Cys633–Cys642. Residue His329 participates in Zn(2+) binding. The active site involves Glu330. 2 residues coordinate Zn(2+): His333 and His339. One can recognise a Disintegrin domain in the interval 403–489 (GPVCGNLFVE…TCPEDAFQQN (87 aa)). Asn431 carries an N-linked (GlcNAc...) asparagine glycan. Residues 611-643 (RSENCSAKCNNHGVCNHKRECHCHKGWAPPNCV) enclose the EGF-like domain. An N-linked (GlcNAc...) asparagine glycan is attached at Asn614. Residues 659–683 (LPVSVVVVLVILVAAMVIVAGIVIY) form a helical membrane-spanning segment. Over 684–826 (RKAPRQIQRR…VALKVPIQKR (143 aa)) the chain is Cytoplasmic. Residues 701 to 826 (SGLSNPLFYT…VALKVPIQKR (126 aa)) are disordered. Pro residues predominate over residues 733–748 (PPRPIVKPKRPPPAPP). Over residues 749 to 763 (GAVSSSPLPVPVYAP) the composition is skewed to low complexity.

Interacts with FST3. Zn(2+) is required as a cofactor. Macrophages.

It is found in the membrane. Possible involvement in extravasation of leukocytes. The sequence is that of Disintegrin and metalloproteinase domain-containing protein 8 (Adam8) from Mus musculus (Mouse).